Reading from the N-terminus, the 466-residue chain is 3-isopropylmalate dehydratase large subunit (466 aa).

Residues cysteine 347, cysteine 407, and cysteine 410 each contribute to the [4Fe-4S] cluster site.

Belongs to the aconitase/IPM isomerase family. LeuC type 1 subfamily. In terms of assembly, heterodimer of LeuC and LeuD. [4Fe-4S] cluster is required as a cofactor.

The catalysed reaction is (2R,3S)-3-isopropylmalate = (2S)-2-isopropylmalate. It participates in amino-acid biosynthesis; L-leucine biosynthesis; L-leucine from 3-methyl-2-oxobutanoate: step 2/4. Its function is as follows. Catalyzes the isomerization between 2-isopropylmalate and 3-isopropylmalate, via the formation of 2-isopropylmaleate. In Vibrio vulnificus (strain CMCP6), this protein is 3-isopropylmalate dehydratase large subunit.